Consider the following 389-residue polypeptide: 8-amino-7-oxononanoate synthase (389 aa).

R18 provides a ligand contact to substrate. 104–105 provides a ligand contact to pyridoxal 5'-phosphate; it reads GY. H129 is a binding site for substrate. 3 residues coordinate pyridoxal 5'-phosphate: S176, H204, and T232. Residue K235 is modified to N6-(pyridoxal phosphate)lysine. Position 351 (T351) interacts with substrate.

Belongs to the class-II pyridoxal-phosphate-dependent aminotransferase family. BioF subfamily. In terms of assembly, homodimer. Requires pyridoxal 5'-phosphate as cofactor.

The catalysed reaction is 6-carboxyhexanoyl-[ACP] + L-alanine + H(+) = (8S)-8-amino-7-oxononanoate + holo-[ACP] + CO2. The protein operates within cofactor biosynthesis; biotin biosynthesis. In terms of biological role, catalyzes the decarboxylative condensation of pimeloyl-[acyl-carrier protein] and L-alanine to produce 8-amino-7-oxononanoate (AON), [acyl-carrier protein], and carbon dioxide. The chain is 8-amino-7-oxononanoate synthase from Citrifermentans bemidjiense (strain ATCC BAA-1014 / DSM 16622 / JCM 12645 / Bem) (Geobacter bemidjiensis).